A 371-amino-acid chain; its full sequence is MLNEFIAIRRELHQIPETGYKELKTQAYLLDYISKLPSEHLEVKKWRTGILVLVKGTNPEKTIGYRTDIDALPITEETGLPFASKHPGNMHACGHDLHMSIALGVLTHFASKPAKDNLLFVFQPAEEGPGGAKPIMESAEFAEWRPDSIYGLHIAPEYKVGEIAIKPGLLFANTSELFISFKGKGGHAAYPHLANDMVVAASAFVGQMQTIISRNIDPMDSAVITIGRIHGGEIQNVIAETAYLDGTIRTLSPETMEIVWTRLKQLAKGWEEAYQCEVEFHPGSDYYQVDNDPVETEAFIHFLEEQYPESYVPARSAMTGEDFGYFLSEIKGFMFWLGVDSEYSLHHAKLSPKEEAIPFAIDVLIHFLESK.

The active site involves Asp-68. Glu-127 acts as the Proton acceptor in catalysis.

Belongs to the peptidase M20A family. N-acetyldiaminopimelate deacetylase subfamily.

It carries out the reaction N-acetyl-(2S,6S)-2,6-diaminopimelate + H2O = (2S,6S)-2,6-diaminopimelate + acetate. The protein operates within amino-acid biosynthesis; L-lysine biosynthesis via DAP pathway; LL-2,6-diaminopimelate from (S)-tetrahydrodipicolinate (acetylase route): step 3/3. Catalyzes the conversion of N-acetyl-diaminopimelate to diaminopimelate and acetate. This is N-acetyldiaminopimelate deacetylase from Listeria monocytogenes serotype 4b (strain CLIP80459).